The chain runs to 284 residues: Pantothenate synthetase (284 aa).

30 to 37 (MGALHNGH) provides a ligand contact to ATP. Histidine 37 serves as the catalytic Proton donor. Position 61 (glutamine 61) interacts with (R)-pantoate. Glutamine 61 contacts beta-alanine. 147–150 (GEKD) is a binding site for ATP. Position 153 (glutamine 153) interacts with (R)-pantoate. ATP is bound by residues leucine 176 and 184-187 (SSSR).

The protein belongs to the pantothenate synthetase family. As to quaternary structure, homodimer.

It localises to the cytoplasm. The catalysed reaction is (R)-pantoate + beta-alanine + ATP = (R)-pantothenate + AMP + diphosphate + H(+). The protein operates within cofactor biosynthesis; (R)-pantothenate biosynthesis; (R)-pantothenate from (R)-pantoate and beta-alanine: step 1/1. Its function is as follows. Catalyzes the condensation of pantoate with beta-alanine in an ATP-dependent reaction via a pantoyl-adenylate intermediate. The polypeptide is Pantothenate synthetase (Bartonella henselae (strain ATCC 49882 / DSM 28221 / CCUG 30454 / Houston 1) (Rochalimaea henselae)).